We begin with the raw amino-acid sequence, 399 residues long: F-box/kelch-repeat protein At5g48980 (399 aa).

Over residues 1–11 (MADSQRLSTAS) the composition is skewed to polar residues. Residues 1–29 (MADSQRLSTASGVKDGQPPWKKKKLSNDT) are disordered. In terms of domain architecture, F-box spans 29-75 (TTSNPSLPYDVILIILARVSRSYYTNLSLVSKSFRSILTSPELYKTR). One copy of the Kelch repeat lies at 199–248 (IVYLPGSFESPDSLNCVEVYNTMTQTWKPVPPEKRMFKLENLEKKIYYKS).

The chain is F-box/kelch-repeat protein At5g48980 from Arabidopsis thaliana (Mouse-ear cress).